The following is a 208-amino-acid chain: ATP-dependent Clp protease proteolytic subunit (208 aa).

Ser-107 serves as the catalytic Nucleophile. The active site involves His-132.

The protein belongs to the peptidase S14 family. As to quaternary structure, fourteen ClpP subunits assemble into 2 heptameric rings which stack back to back to give a disk-like structure with a central cavity, resembling the structure of eukaryotic proteasomes.

It localises to the cytoplasm. The catalysed reaction is Hydrolysis of proteins to small peptides in the presence of ATP and magnesium. alpha-casein is the usual test substrate. In the absence of ATP, only oligopeptides shorter than five residues are hydrolyzed (such as succinyl-Leu-Tyr-|-NHMec, and Leu-Tyr-Leu-|-Tyr-Trp, in which cleavage of the -Tyr-|-Leu- and -Tyr-|-Trp bonds also occurs).. In terms of biological role, cleaves peptides in various proteins in a process that requires ATP hydrolysis. Has a chymotrypsin-like activity. Plays a major role in the degradation of misfolded proteins. This is ATP-dependent Clp protease proteolytic subunit from Methylorubrum populi (strain ATCC BAA-705 / NCIMB 13946 / BJ001) (Methylobacterium populi).